The sequence spans 99 residues: Transmembrane protein 14A (99 aa).

3 helical membrane-spanning segments follow: residues 1 to 21 (MDLIGFGYAALVTIGSVLGYK), 24 to 44 (GGVPSLIAGLSVGLLAGYGAY), and 79 to 99 (PAGLVAGLSLMMILRLVLLLL).

It belongs to the TMEM14 family.

The protein localises to the mitochondrion membrane. It localises to the endoplasmic reticulum membrane. Its function is as follows. Inhibits apoptosis via negative regulation of the mitochondrial outer membrane permeabilization involved in apoptotic signaling pathway. This is Transmembrane protein 14A (Tmem14a) from Mus musculus (Mouse).